Here is a 447-residue protein sequence, read N- to C-terminus: Argininosuccinate synthase (447 aa).

Residues 20 to 28 and Ala-46 contribute to the ATP site; that span reads AFSGGLDTS. Residue Tyr-102 participates in L-citrulline binding. The ATP site is built by Gly-132 and Thr-134. Residues Thr-134, Asn-138, and Asp-139 each contribute to the L-aspartate site. Asn-138 lines the L-citrulline pocket. Asp-139 is a binding site for ATP. L-citrulline is bound by residues Arg-142 and Ser-195. An ATP-binding site is contributed by Asp-197. Residues Thr-204, Glu-206, and Glu-283 each contribute to the L-citrulline site.

The protein belongs to the argininosuccinate synthase family. Type 2 subfamily. As to quaternary structure, homotetramer.

It is found in the cytoplasm. The catalysed reaction is L-citrulline + L-aspartate + ATP = 2-(N(omega)-L-arginino)succinate + AMP + diphosphate + H(+). The protein operates within amino-acid biosynthesis; L-arginine biosynthesis; L-arginine from L-ornithine and carbamoyl phosphate: step 2/3. This Neisseria meningitidis serogroup C (strain 053442) protein is Argininosuccinate synthase.